The primary structure comprises 297 residues: Adrenocorticotropic hormone receptor (297 aa).

Residues 1–23 lie on the Extracellular side of the membrane; it reads MKHIITPYEHTNDTARNNSDCPD. Asn12 and Asn17 each carry an N-linked (GlcNAc...) asparagine glycan. Intrachain disulfides connect Cys21–Cys253 and Cys245–Cys251. The helical transmembrane segment at 24-49 threads the bilayer; that stretch reads VVLPEEIFFTISIIGVLENLIVLLAV. At 50-58 the chain is on the cytoplasmic side; sequence VKNKNLQCP. The helical transmembrane segment at 59-79 threads the bilayer; sequence MYFFICSLAISDMLGSLYKIL. The Extracellular portion of the chain corresponds to 80–104; sequence ENILIMFRNRGYLQPRGNFESTADD. The helical transmembrane segment at 105–126 threads the bilayer; it reads IIDCMFILSLLGSIFSLSVIAA. The Cytoplasmic segment spans residues 127–147; it reads DRYITIFHALQYHSIVTMRRT. The chain crosses the membrane as a helical span at residues 148–168; that stretch reads IITLTVIWIFCTGSGIAMVIF. Residues 169 to 180 lie on the Extracellular side of the membrane; the sequence is SHHVPTVLTFTS. The chain crosses the membrane as a helical span at residues 181-199; that stretch reads LFPLMLVFILCLYIHMFLL. Residues 200–217 lie on the Cytoplasmic side of the membrane; it reads ARSHARKISTLPRANMKG. A helical transmembrane segment spans residues 218 to 244; that stretch reads AITLTILLGVFIFCWAPFILHVLLMTF. Topologically, residues 245–256 are extracellular; the sequence is CPNNPYCVCYMS. Residues 257–278 form a helical membrane-spanning segment; sequence LFQINGMLIMCNAVIDPFIYAF. Residues 279–297 are Cytoplasmic-facing; it reads RSPELRDAFKKMFSCHRYQ. Cys293 carries S-palmitoyl cysteine lipidation.

Belongs to the G-protein coupled receptor 1 family. In terms of assembly, homodimer. Interacts with corticotropin (ACTH). Interacts with MRAP; this interaction targets MC2R to the plasma membrane. Interacts with MRAP2; competing with MRAP for binding to MC2R and impairing the binding of corticotropin (ACTH). Post-translationally, ubiquitinated by MGRN1 that may be involved in post-endocytic trafficking and/or degradation of internalized receptor.

The protein localises to the cell membrane. Its function is as follows. Hormone receptor primarily expressed in adrenal cortex that plays a key role in regulating adrenocortical function. Upon corticotropin (ACTH) binding, facilitates the release of adrenal glucocorticoids, including cortisol and corticosterone. In addition, MC2R is required for fetal and neonatal adrenal gland development. Mechanistically, activates adenylate cyclase (cAMP), the MAPK cascade as well as the cAMP-dependent protein kinase A pathway leading to steroidogenic factor 1/NR5A1-mediated transcriptional activation. The chain is Adrenocorticotropic hormone receptor (MC2R) from Mesocricetus auratus (Golden hamster).